The sequence spans 165 residues: Cysteine-rich hydrophobic domain-containing protein 2 (165 aa).

A coiled-coil region spans residues 1–26 (MADFDEIYEEEEDEERALEEQLLKYS). Positions 88–106 (CGCLCCCCTLGCSMWPVIC) match the CHIC motif (Cys-rich) motif.

This sequence belongs to the CHIC family. Palmitoylation in the CHIC motif is required for membrane association.

The protein localises to the membrane. The protein resides in the golgi apparatus. The chain is Cysteine-rich hydrophobic domain-containing protein 2 (Chic2) from Mus musculus (Mouse).